A 342-amino-acid polypeptide reads, in one-letter code: S-adenosylmethionine:tRNA ribosyltransferase-isomerase (342 aa).

It belongs to the QueA family. In terms of assembly, monomer.

It is found in the cytoplasm. The catalysed reaction is 7-aminomethyl-7-carbaguanosine(34) in tRNA + S-adenosyl-L-methionine = epoxyqueuosine(34) in tRNA + adenine + L-methionine + 2 H(+). Its pathway is tRNA modification; tRNA-queuosine biosynthesis. Its function is as follows. Transfers and isomerizes the ribose moiety from AdoMet to the 7-aminomethyl group of 7-deazaguanine (preQ1-tRNA) to give epoxyqueuosine (oQ-tRNA). The sequence is that of S-adenosylmethionine:tRNA ribosyltransferase-isomerase from Sulfurimonas denitrificans (strain ATCC 33889 / DSM 1251) (Thiomicrospira denitrificans (strain ATCC 33889 / DSM 1251)).